Here is an 883-residue protein sequence, read N- to C-terminus: MEPVSDETLAPKYDHKAVEEGRYQEWLDEDVFKPSGDKKAKPYSIVIPPPNVTGKLHMGHAWDTTLQDIVIRQKRIEGFDTLWLPGMDHAGIATQAKVEAKLRKEGISRYDLGREKFVQKVWEWKDEFAKTIHGQWAKMGLSLDYSRERFTLDKGLNQAVRRVFVDLYNQGLIYRGEYIVNWDPQARTALSDIEVIHKDDKGAFYHVKYPFADGSGYIEIATTRPETMMGDTAVAVHPGDERYKDMVGTELILPLANRKIPIIEDAYVDPEFGTGAVKITPAHDPNDFQVGNRHDLKRINTMNDDGTMNENAGKYQGMDRFEARKAMVADLDKAGLLLKVEPIVHSVGHSERTGVQVEARLSTQWFVKMKPLAEAAIKAQQEPDKKVTFVPERFEHTYLQWMENIHDWVISRQLWWGHQIPAWYNKQTGETYVGMEAPKDIENWKQDPDVLDTWFSSALWPFSTMGWPNTDAPDYKRYYPTDTLVTGYDIIPFWVARMIFQGLHFTHQRPFQYTLIHGLMRDEQGRKMSKSLGNGIDPMDVIEKYGADALRWFLITGNKPGQDTRFSYKQVEAAWNFINKIWNISRFVMMNLGDLDTPQQPDPSTFDLSDKWLFAQLNETIKQVMDLSARFEFGEMGRTLYNFTWNVLADWYVEMSKEVLYGDDEQAKAAKRVNLAYALDQILRLLHPVMPFVHGKLWLALPHTGKSIVTASYPVANTAFENADATSAMDAIIALIRGVRGIRKEAGAPLKTKVDILVKLTDPALKPIFEQNFDFIDRFVNSKAFTVGTDVAEPKMAGSAVITGATIFVPLNELIDLDEEKAKLTKDAKKLEQEIARIDKKLNNQGFLSKAPEAVVAEQRTKRSDFEDQLTSTKQRLEQLQRA.

The 'HIGH' region motif lies at 50–60 (PNVTGKLHMGH). Residues 527–531 (KMSKS) carry the 'KMSKS' region motif. Residue K530 coordinates ATP. Residues 811 to 883 (LNELIDLDEE…KQRLEQLQRA (73 aa)) adopt a coiled-coil conformation. The segment at 859-883 (QRTKRSDFEDQLTSTKQRLEQLQRA) is disordered.

It belongs to the class-I aminoacyl-tRNA synthetase family. ValS type 1 subfamily. Monomer.

The protein resides in the cytoplasm. It carries out the reaction tRNA(Val) + L-valine + ATP = L-valyl-tRNA(Val) + AMP + diphosphate. Its function is as follows. Catalyzes the attachment of valine to tRNA(Val). As ValRS can inadvertently accommodate and process structurally similar amino acids such as threonine, to avoid such errors, it has a 'posttransfer' editing activity that hydrolyzes mischarged Thr-tRNA(Val) in a tRNA-dependent manner. In Lacticaseibacillus casei (Lactobacillus casei), this protein is Valine--tRNA ligase.